Reading from the N-terminus, the 66-residue chain is Phylloseptin-S2 (66 aa).

The N-terminal stretch at 1-22 (MAFLKKSLFLVLFLGLVSLSIC) is a signal peptide. A propeptide spanning residues 23-46 (EEEKRETEEEEHDQEEDDKSEEKR) is cleaved from the precursor. A disordered region spans residues 25–44 (EKRETEEEEHDQEEDDKSEE). Residues 30–41 (EEEEHDQEEDDK) are compositionally biased toward acidic residues. A Phenylalanine amide modification is found at phenylalanine 65.

In terms of tissue distribution, expressed by the skin glands.

The protein resides in the secreted. The protein localises to the target cell membrane. Its function is as follows. Antimicrobial peptide with high activity against Gram-positive bacteria, moderate activity against Gram-negative bacteria, and moderate activity against fungi. Acts by causing bacterial membrane disruption inducing leakage of the intracellular content followed by cell death. It adopts an alpha-helical amphipathic structure in membrane environments. Also shows highly potent antiparasitic activity against Leishmania species. Shows moderate hemolytic activity on human erythrocytes (LC(50)=25 uM). Is also active on human monocytes (IC(50)=22.5 uM). This chain is Phylloseptin-S2, found in Phyllomedusa sauvagei (Sauvage's leaf frog).